The following is a 246-amino-acid chain: 1-(5-phosphoribosyl)-5-[(5-phosphoribosylamino)methylideneamino] imidazole-4-carboxamide isomerase (246 aa).

Aspartate 10 serves as the catalytic Proton acceptor. The active-site Proton donor is aspartate 131.

The protein belongs to the HisA/HisF family.

Its subcellular location is the cytoplasm. The enzyme catalyses 1-(5-phospho-beta-D-ribosyl)-5-[(5-phospho-beta-D-ribosylamino)methylideneamino]imidazole-4-carboxamide = 5-[(5-phospho-1-deoxy-D-ribulos-1-ylimino)methylamino]-1-(5-phospho-beta-D-ribosyl)imidazole-4-carboxamide. It participates in amino-acid biosynthesis; L-histidine biosynthesis; L-histidine from 5-phospho-alpha-D-ribose 1-diphosphate: step 4/9. This is 1-(5-phosphoribosyl)-5-[(5-phosphoribosylamino)methylideneamino] imidazole-4-carboxamide isomerase from Acidiphilium cryptum (strain JF-5).